A 319-amino-acid polypeptide reads, in one-letter code: Annexin A4 (319 aa).

Threonine 7 is subject to Phosphothreonine. A Phosphoserine modification is found at serine 12. Annexin repeat units follow at residues 14–85 (FNAT…GMMT), 86–157 (PTVL…SLTA), 169–241 (ALVR…AIVK), and 245–316 (NKPA…ILCG). N6-acetyllysine occurs at positions 213, 293, and 300.

Belongs to the annexin family.

The protein resides in the zymogen granule membrane. Functionally, calcium/phospholipid-binding protein which promotes membrane fusion and is involved in exocytosis. This is Annexin A4 (Anxa4) from Rattus norvegicus (Rat).